The sequence spans 205 residues: ATP phosphoribosyltransferase (205 aa).

It belongs to the ATP phosphoribosyltransferase family. Short subfamily. Heteromultimer composed of HisG and HisZ subunits.

It is found in the cytoplasm. The enzyme catalyses 1-(5-phospho-beta-D-ribosyl)-ATP + diphosphate = 5-phospho-alpha-D-ribose 1-diphosphate + ATP. Its pathway is amino-acid biosynthesis; L-histidine biosynthesis; L-histidine from 5-phospho-alpha-D-ribose 1-diphosphate: step 1/9. In terms of biological role, catalyzes the condensation of ATP and 5-phosphoribose 1-diphosphate to form N'-(5'-phosphoribosyl)-ATP (PR-ATP). Has a crucial role in the pathway because the rate of histidine biosynthesis seems to be controlled primarily by regulation of HisG enzymatic activity. The chain is ATP phosphoribosyltransferase from Leptospira interrogans serogroup Icterohaemorrhagiae serovar Lai (strain 56601).